A 411-amino-acid polypeptide reads, in one-letter code: Probable UDP-arabinose 4-epimerase 3 (411 aa).

The segment covering 1 to 13 (MLSFSRARSQGRN) has biased composition (polar residues). Positions 1-22 (MLSFSRARSQGRNTRPLGGGME) are disordered. The Cytoplasmic portion of the chain corresponds to 1 to 31 (MLSFSRARSQGRNTRPLGGGMEYLEPKRKSN). The chain crosses the membrane as a helical; Signal-anchor for type II membrane protein span at residues 32–50 (VMGKIILVVSLTALCIFML). The Lumenal portion of the chain corresponds to 51 to 411 (KHAPSFTSPT…KTHPHGYASS (361 aa)). NAD(+) is bound at residue 71 to 102 (HVLVTGGAGYIGSHAALRLLKDSYRVTIVDNL). The active-site Proton acceptor is the Tyr-219.

It belongs to the NAD(P)-dependent epimerase/dehydratase family. NAD(+) is required as a cofactor.

The protein localises to the golgi apparatus. It is found in the golgi stack membrane. It carries out the reaction UDP-beta-L-arabinopyranose = UDP-alpha-D-xylose. It functions in the pathway nucleotide-sugar biosynthesis; UDP-L-arabinose biosynthesis; UDP-L-arabinose from UDP-alpha-D-xylose: step 1/1. The protein operates within cell wall biogenesis; cell wall polysaccharide biosynthesis. In Arabidopsis thaliana (Mouse-ear cress), this protein is Probable UDP-arabinose 4-epimerase 3.